The primary structure comprises 233 residues: MSNKKNNIIKIMILGEKEVGKSSLLIRATKDEFNSQYIPTIGIDFDYKIMEIKGEKYKLQIWDYVSHDHINVFNKQVLSNTKIILLLFDLTNKSSFDSINNWLLKLDQSNKDNSIQIFLVGTKSDLISNRQVSLLDIQSKFIQNNNNNNNNNNNNNNNNNNNNNNNNNNNNNSNNNNNNNLQYFEISSKDNNNVEFLFTSVIDYYLLKAQPKFEEEIKNKKKKLKITVSWFDI.

A GTP-binding site is contributed by 15–22; the sequence is GEKEVGKS. Positions 37 to 45 match the Effector region motif; sequence YIPTIGIDF. GTP contacts are provided by residues 63 to 67 and 122 to 125; these read DYVSH and TKSD. A disordered region spans residues 143–182; that stretch reads QNNNNNNNNNNNNNNNNNNNNNNNNNNNNNSNNNNNNNLQ. Over residues 144–180 the composition is skewed to low complexity; the sequence is NNNNNNNNNNNNNNNNNNNNNNNNNNNNNSNNNNNNN.

Belongs to the small GTPase superfamily. Rab family.

This is Ras-related protein RabV (rabV) from Dictyostelium discoideum (Social amoeba).